Reading from the N-terminus, the 509-residue chain is Heat shock 70 kDa protein 14 (509 aa).

It belongs to the heat shock protein 70 family. Component of ribosome-associated complex (RAC), a heterodimer composed of Hsp70/DnaK-type chaperone HSPA14 and Hsp40/DnaJ-type chaperone DNAJC2.

Its subcellular location is the cytoplasm. It localises to the cytosol. Its function is as follows. Component of the ribosome-associated complex (RAC), a complex involved in folding or maintaining nascent polypeptides in a folding-competent state. In the RAC complex, binds to the nascent polypeptide chain, while DNAJC2 stimulates its ATPase activity. The chain is Heat shock 70 kDa protein 14 (HSPA14) from Homo sapiens (Human).